A 472-amino-acid polypeptide reads, in one-letter code: Ribulose bisphosphate carboxylase/oxygenase activase, chloroplastic (472 aa).

Residues 1 to 58 (MATAVSTVGAATRAPLNLNGSSAGASVPTSGFLGSSLKKHTNVRFPSSSRTTSMTVKA) constitute a chloroplast transit peptide. Position 163–170 (163–170 (GGKGQGKS)) interacts with ATP. Residues 448 to 472 (GCTDPEAKNYDPTARSDDGSCTYNL) form a disordered region. Positions 452–465 (PEAKNYDPTARSDD) are enriched in basic and acidic residues.

Belongs to the RuBisCO activase family.

It is found in the plastid. The protein resides in the chloroplast stroma. Activation of RuBisCO (ribulose-1,5-bisphosphate carboxylase/oxygenase; EC 4.1.1.39) involves the ATP-dependent carboxylation of the epsilon-amino group of lysine leading to a carbamate structure. This Spinacia oleracea (Spinach) protein is Ribulose bisphosphate carboxylase/oxygenase activase, chloroplastic.